Reading from the N-terminus, the 374-residue chain is uncharacterized protein (374 aa).

Positions Met-1 to Pro-23 are cleaved as a signal peptide. Residues Ser-66–Asn-374 are disordered.

It is found in the secreted. This is an uncharacterized protein from Dictyostelium discoideum (Social amoeba).